Consider the following 501-residue polypeptide: Lysine--tRNA ligase (501 aa).

Mg(2+) is bound by residues glutamate 404 and glutamate 411.

The protein belongs to the class-II aminoacyl-tRNA synthetase family. In terms of assembly, homodimer. Requires Mg(2+) as cofactor.

The protein resides in the cytoplasm. The enzyme catalyses tRNA(Lys) + L-lysine + ATP = L-lysyl-tRNA(Lys) + AMP + diphosphate. The sequence is that of Lysine--tRNA ligase from Campylobacter jejuni (strain RM1221).